The primary structure comprises 134 residues: Kinetochore-binding protein 3 (134 aa).

It localises to the nucleus. The protein resides in the chromosome. The protein localises to the centromere. It is found in the kinetochore. The protein is Kinetochore-binding protein 3 (kbp-3) of Caenorhabditis elegans.